A 176-amino-acid chain; its full sequence is Probable fimbrial subunit LpfE (176 aa).

The N-terminal stretch at 1 to 23 is a signal peptide; sequence MKFKRLLHSGIASLSLVACGVNA.

Belongs to the fimbrial protein family.

The protein localises to the fimbrium. Functionally, part of the lpfABCC'DE fimbrial operon. LP fimbriae may participate in the interaction with eukaryotic cells by assisting in microcolony formation. The polypeptide is Probable fimbrial subunit LpfE (lpfE) (Escherichia coli O157:H7).